Here is a 325-residue protein sequence, read N- to C-terminus: Transaldolase (325 aa).

Lys-125 serves as the catalytic Schiff-base intermediate with substrate.

This sequence belongs to the transaldolase family. Type 2 subfamily.

The protein resides in the cytoplasm. It catalyses the reaction D-sedoheptulose 7-phosphate + D-glyceraldehyde 3-phosphate = D-erythrose 4-phosphate + beta-D-fructose 6-phosphate. Its pathway is carbohydrate degradation; pentose phosphate pathway; D-glyceraldehyde 3-phosphate and beta-D-fructose 6-phosphate from D-ribose 5-phosphate and D-xylulose 5-phosphate (non-oxidative stage): step 2/3. In terms of biological role, transaldolase is important for the balance of metabolites in the pentose-phosphate pathway. In Campylobacter jejuni subsp. jejuni serotype O:6 (strain 81116 / NCTC 11828), this protein is Transaldolase.